The chain runs to 90 residues: Probable Fe(2+)-trafficking protein (90 aa).

It belongs to the Fe(2+)-trafficking protein family.

Could be a mediator in iron transactions between iron acquisition and iron-requiring processes, such as synthesis and/or repair of Fe-S clusters in biosynthetic enzymes. This is Probable Fe(2+)-trafficking protein from Bordetella bronchiseptica (strain ATCC BAA-588 / NCTC 13252 / RB50) (Alcaligenes bronchisepticus).